The sequence spans 110 residues: Cell cycle protein GpsB (110 aa).

Positions 37-63 form a coiled coil; it reads KDYTVYIALVKELQEENAKLKAKATSA. The interval 59 to 79 is disordered; it reads KATSAPASRPAYASATSEPSH. Residues 60–75 are compositionally biased toward low complexity; sequence ATSAPASRPAYASATS.

This sequence belongs to the GpsB family. Forms polymers through the coiled coil domains. Interacts with PBP1, MreC and EzrA.

It is found in the cytoplasm. Divisome component that associates with the complex late in its assembly, after the Z-ring is formed, and is dependent on DivIC and PBP2B for its recruitment to the divisome. Together with EzrA, is a key component of the system that regulates PBP1 localization during cell cycle progression. Its main role could be the removal of PBP1 from the cell pole after pole maturation is completed. Also contributes to the recruitment of PBP1 to the division complex. Not essential for septum formation. In Streptococcus thermophilus (strain CNRZ 1066), this protein is Cell cycle protein GpsB.